A 376-amino-acid polypeptide reads, in one-letter code: 4-hydroxy-3-methylbut-2-en-1-yl diphosphate synthase (flavodoxin) (376 aa).

Residues cysteine 272, cysteine 275, cysteine 307, and glutamate 314 each coordinate [4Fe-4S] cluster.

It belongs to the IspG family. It depends on [4Fe-4S] cluster as a cofactor.

It carries out the reaction (2E)-4-hydroxy-3-methylbut-2-enyl diphosphate + oxidized [flavodoxin] + H2O + 2 H(+) = 2-C-methyl-D-erythritol 2,4-cyclic diphosphate + reduced [flavodoxin]. Its pathway is isoprenoid biosynthesis; isopentenyl diphosphate biosynthesis via DXP pathway; isopentenyl diphosphate from 1-deoxy-D-xylulose 5-phosphate: step 5/6. Converts 2C-methyl-D-erythritol 2,4-cyclodiphosphate (ME-2,4cPP) into 1-hydroxy-2-methyl-2-(E)-butenyl 4-diphosphate. In Blochmanniella pennsylvanica (strain BPEN), this protein is 4-hydroxy-3-methylbut-2-en-1-yl diphosphate synthase (flavodoxin).